We begin with the raw amino-acid sequence, 264 residues long: Glutamate racemase (264 aa).

Residues 9–10 (DS) and 41–42 (YG) contribute to the substrate site. C72 (proton donor/acceptor) is an active-site residue. 73–74 (NT) contributes to the substrate binding site. The active-site Proton donor/acceptor is C183. 184–185 (TH) is a substrate binding site.

Belongs to the aspartate/glutamate racemases family.

It catalyses the reaction L-glutamate = D-glutamate. It participates in cell wall biogenesis; peptidoglycan biosynthesis. Provides the (R)-glutamate required for cell wall biosynthesis. The sequence is that of Glutamate racemase from Geobacillus sp. (strain WCH70).